We begin with the raw amino-acid sequence, 1141 residues long: Translocase of chloroplast 125, chloroplastic (1141 aa).

Disordered stretches follow at residues 1–177 (MDAL…ISGY) and 325–431 (GFVE…EANE). Composition is skewed to basic and acidic residues over residues 57–72 (RVPE…KRDG) and 107–121 (IDGR…REDL). Residues 132–150 (YDDDDDDEEEEEDGSEEGE) are compositionally biased toward acidic residues. The span at 151–167 (STSSSIINSEYSSSASN) shows a compositional bias: low complexity. The span at 328–353 (EAEEAESDVFTEGEDGYDDEDEDGDI) shows a compositional bias: acidic residues. Composition is skewed to low complexity over residues 389-401 (RSSA…TTAT) and 408-429 (TASS…SSEA). The region spanning 505-734 (DFACTILVLG…KLQEASTPGK (230 aa)) is the AIG1-type G domain. The segment at 514–521 (GKTGVGKS) is G1. A GTP-binding site is contributed by 517-522 (GVGKSA). Ser521 contributes to the Mg(2+) binding site. The segment at 541 to 545 (STTKV) is G2. The interval 561 to 564 (DTPG) is G3. Positions 633–636 (THAS) are G4. GTP is bound by residues His634 and 682–683 (EN). Residues 682 to 684 (ENH) form a G5 region. Disordered stretches follow at residues 758 to 795 (QLKM…PFRP) and 832 to 871 (IRRR…AVPM). Positions 770 to 789 (EDSDDDSDEEDEEEGDEYDD) are enriched in acidic residues. Residues 832–841 (IRRRRERKKQ) are compositionally biased toward basic residues. Residues 1116-1136 (MVLIGIVPILRSLINCRFGFG) traverse the membrane as a helical segment.

This sequence belongs to the TRAFAC class TrmE-Era-EngA-EngB-Septin-like GTPase superfamily. AIG1/Toc34/Toc159-like paraseptin GTPase family. TOC159 subfamily. Part of the TOC core complex. Requires Mg(2+) as cofactor.

It localises to the plastid. Its subcellular location is the chloroplast outer membrane. In terms of biological role, GTPase involved in protein precursor import into chloroplasts. Seems to recognize chloroplast-destined precursor proteins and regulate their presentation to the translocation channel through GTP hydrolysis. Probably specialized in the import of nuclear encoded non-photosynthetic preproteins from the cytoplasm to the chloroplast. In Physcomitrium patens (Spreading-leaved earth moss), this protein is Translocase of chloroplast 125, chloroplastic.